Here is a 374-residue protein sequence, read N- to C-terminus: MLVIPPGLSEEEEALQKKFNKLKKKKKALLALKKQSSSSTASQGGVKRSLSEQPVVDTATATEQAKQLVKSGAISAIKAETKNSGFKRSRTLEGKLKDPEKGPVPTFQPFQRSVSADDDLQESSRRPQRKSLYESFVSSSDRLRELGPDGEEAEGPGAGDGPPRSFDWGYEERGGARSSASPPRSRSRDRSRERNRDRDRDRDRERDRERDRDRDRDRERDRDRDRDRDRDRERDREGPFRRSDSFPERRAPRKGNTLYVYGEDMTPTLLRGAFSPFGNIIDLSMDPPRNCAFVTYEKMESADQAVAELNGTQVESVQLKVSIARKQPMLDAATGKSVWGSLAVQNSPKGCHRDKRTQIVYSDDVYKENLVDGF.

The stretch at 7–36 (GLSEEEEALQKKFNKLKKKKKALLALKKQS) forms a coiled coil. The segment covering 30–43 (LALKKQSSSSTASQ) has biased composition (low complexity). Residues 30–58 (LALKKQSSSSTASQGGVKRSLSEQPVVDT) form a disordered region. Serine 51 carries the post-translational modification Phosphoserine. Residue lysine 78 forms a Glycyl lysine isopeptide (Lys-Gly) (interchain with G-Cter in SUMO1); alternate linkage. A Glycyl lysine isopeptide (Lys-Gly) (interchain with G-Cter in SUMO2); alternate cross-link involves residue lysine 78. The interval 79–252 (AETKNSGFKR…SDSFPERRAP (174 aa)) is disordered. Lysine 82 participates in a covalent cross-link: Glycyl lysine isopeptide (Lys-Gly) (interchain with G-Cter in SUMO2). Positions 90-101 (RTLEGKLKDPEK) are enriched in basic and acidic residues. 2 positions are modified to phosphoserine: serine 113 and serine 115. At glutamate 122 the chain carries PolyADP-ribosyl glutamic acid. Phosphoserine is present on residues serine 131 and serine 139. Position 151 is a polyADP-ribosyl glutamic acid (glutamate 151). Position 165 is a phosphoserine (serine 165). Glutamate 172 bears the PolyADP-ribosyl glutamic acid mark. Residues serine 179, serine 181, serine 185, and serine 187 each carry the phosphoserine modification. A run of 27 repeats spans residues 184–185 (RS), 186–187 (RS), 188–189 (RD), 190–191 (RS), 192–193 (RE), 194–195 (RN), 196–197 (RD), 198–199 (RD), 200–201 (RD), 202–203 (RD), 204–205 (RE), 206–207 (RD), 208–209 (RE), 210–211 (RD), 212–213 (RD), 214–215 (RD), 216–217 (RD), 218–219 (RE), 220–221 (RD), 222–223 (RD), 224–225 (RD), 226–227 (RD), 228–229 (RD), 230–231 (RD), 232–233 (RE), 234–235 (RD), and 236–237 (RE). The tract at residues 184 to 237 (RSRSRDRSRERNRDRDRDRDRERDRERDRDRDRDRERDRDRDRDRDRDRERDRE) is 27 X 2 AA approximate tandem repeats of R-[DSNE]. A compositionally biased stretch (basic and acidic residues) spans 186–250 (RSRDRSRERN…RRSDSFPERR (65 aa)). Position 191 is a phosphoserine (serine 191). Residues serine 243 and serine 245 each carry the phosphoserine modification. In terms of domain architecture, RRM spans 256–326 (NTLYVYGEDM…VQLKVSIARK (71 aa)). Threonine 266 and threonine 268 each carry phosphothreonine. 2 positions are modified to phosphoserine: serine 275 and serine 347. The residue at position 368 (glutamate 368) is a PolyADP-ribosyl glutamic acid.

This sequence belongs to the RRM NELF-E family. The NELF complex is composed of NELFA, NELFB, NELFCD and NELFE. Interacts with NELFB. In terms of processing, phosphorylated by the P-TEFb complex at sites next to its RNA recognition motif, promoting its release from chromatin. Sumoylated. Post-translationally, poly-ADP-ribosylated by PARP1, thereby preventing RNA-binding and relieving transcription pausing.

The protein resides in the nucleus. It localises to the chromosome. In terms of biological role, essential component of the NELF complex, a complex that negatively regulates the elongation of transcription by RNA polymerase II. The NELF complex, which acts via an association with the DSIF complex and causes transcriptional pausing, is counteracted by the P-TEFb kinase complex. Provides the strongest RNA binding activity of the NELF complex and may initially recruit the NELF complex to RNA. The sequence is that of Negative elongation factor E (NELFE) from Bos taurus (Bovine).